The chain runs to 97 residues: Putative pterin-4-alpha-carbinolamine dehydratase (97 aa).

Belongs to the pterin-4-alpha-carbinolamine dehydratase family.

It carries out the reaction (4aS,6R)-4a-hydroxy-L-erythro-5,6,7,8-tetrahydrobiopterin = (6R)-L-erythro-6,7-dihydrobiopterin + H2O. In Saccharolobus solfataricus (strain ATCC 35092 / DSM 1617 / JCM 11322 / P2) (Sulfolobus solfataricus), this protein is Putative pterin-4-alpha-carbinolamine dehydratase.